The primary structure comprises 1129 residues: Protein DWARF 53-LIKE (1129 aa).

In terms of domain architecture, Clp R spans 8 to 180 (ARQCLSPAAV…KLAILRPAPP (173 aa)). Repeat stretches follow at residues 12 to 85 (LSPA…LDRL) and 102 to 180 (VSNS…PAPP). A disordered region spans residues 519 to 573 (RYIGVPADKERSANPSKGSESIGVQKDVIKPCAVSAVHSSSTARPISSPSVTNKR). Positions 557-568 (SSSTARPISSPS) are enriched in low complexity. The short motif at 577–581 (LVLNL) is the EAR 1 element. The segment at 587-654 (KSDENLQERG…KRVEDSERSV (68 aa)) is disordered. Positions 596 to 608 (GMQSQHGTLSNAD) are enriched in polar residues. A compositionally biased stretch (basic and acidic residues) spans 645–654 (KRVEDSERSV). 2 consecutive short sequence motifs (EAR) follow at residues 798–802 (LDLNL) and 975–980 (FDLNLP). Positions 975-1001 (FDLNLPVDEDEPFDADDDSSSHENSYG) are disordered. Positions 981-992 (VDEDEPFDADDD) are enriched in acidic residues.

Belongs to the ClpA/ClpB family. Post-translationally, polyubiquitinated. Strigolactone, but not karrikin, triggers rapid SCF(D3)-dependent degradation via the proteasome.

Repressor of strigolactones (SL) signaling. Subjected to a negative feedback control of SL signaling. This chain is Protein DWARF 53-LIKE, found in Oryza sativa subsp. japonica (Rice).